Reading from the N-terminus, the 739-residue chain is MPFPVTTQGSQQTQPPQKHYGITSPISLAAPKETDCLLTQKLVETLKPFGVFEEEEELQRRILILGKLNNLVKEWIREISESKNLPQSVIENVGGKIFTFGSYRLGVHTKGADIDALCVAPRHVDRSDFFTSFYDKLKLQEEVKDLRAVEEAFVPVIKLCFDGIEIDILFARLALQTIPEDLDLRDDSLLKNLDIRCIRSLNGCRVTDEILHLVPNIDNFRLTLRAIKLWAKRHNIYSNILGFLGGVSWAMLVARTCQLYPNAIASTLVHKFFLVFSKWEWPNPVLLKQPEECNLNLPVWDPRVNPSDRYHLMPIITPAYPQQNSTYNVSVSTRMVMVEEFKQGLAITDEILLSKAEWSKLFEAPNFFQKYKHYIVLLASAPTEKQRLEWVGLVESKIRILVGSLEKNEFITLAHVNPQSFPAPKENPDKEEFRTMWVIGLVFKKTENSENLSVDLTYDIQSFTDTVYRQAINSKMFEVDMKIAAMHVKRKQLHQLLPSHVLQKKKKHSTEGVKLTPLNDSSLDLSMDSDNSMSVPSPTSAMKTSPLNSSGSSQGRNSPAPAVTAASVTNIQATEVSLPQINSSESSGGTSSESIPQTATQPAISSPPKPTVSRVVSSTRLVNPPPRPSGNAAAKIPNPIVGVKRTSSPHKEESPKKTKTEEDETSEDANCLALSGHDKTETKEQLDTETSTTQSETIQTATSLLASQKTSSTDLSDIPALPANPIPVIKNSIKLRLNR.

A compositionally biased stretch (low complexity) spans 1–17 (MPFPVTTQGSQQTQPPQ). A disordered region spans residues 1 to 23 (MPFPVTTQGSQQTQPPQKHYGIT). Phosphoserine occurs at positions 10 and 24. Residues 100–102 (FGS), threonine 109, 113–115 (DID), aspartate 167, lysine 228, tyrosine 237, and 246–247 (GV) each bind ATP. Residues aspartate 113, aspartate 115, and aspartate 167 each coordinate Mg(2+). Glycyl lysine isopeptide (Lys-Gly) (interchain with G-Cter in SUMO) cross-links involve residues lysine 444, lysine 445, lysine 506, and lysine 507. Positions 490 to 507 (RKQLHQLLPSHVLQKKKK) match the Nuclear localization signal 1 motif. Disordered regions lie at residues 501 to 565 (VLQK…AVTA) and 580 to 700 (QINS…TIQT). A ser/Thr-rich region spans residues 508–643 (HSTEGVKLTP…AKIPNPIVGV (136 aa)). Positions 518–534 (LNDSSLDLSMDSDNSMS) are enriched in low complexity. Over residues 535 to 557 (VPSPTSAMKTSPLNSSGSSQGRN) the composition is skewed to polar residues. At serine 537 the chain carries Phosphoserine; by MAPK. At serine 558 the chain carries Phosphoserine. Residues 583-594 (SSESSGGTSSES) are compositionally biased toward low complexity. A compositionally biased stretch (polar residues) spans 595–604 (IPQTATQPAI). Low complexity predominate over residues 611–620 (TVSRVVSSTR). An N6-acetyllysine mark is found at lysine 635 and lysine 644. The Nuclear localization signal 2 signature appears at 644 to 659 (KRTSSPHKEESPKKTK). Composition is skewed to basic and acidic residues over residues 649 to 660 (PHKEESPKKTKT) and 676 to 686 (GHDKTETKEQL). Residues 671–739 (CLALSGHDKT…KNSIKLRLNR (69 aa)) are required for interaction with NUDT21. Positions 688 to 700 (TETSTTQSETIQT) are enriched in low complexity. Lysine 730 is modified (N6-acetyllysine; alternate). Lysine 730 participates in a covalent cross-link: Glycyl lysine isopeptide (Lys-Gly) (interchain with G-Cter in SUMO); alternate. Residue serine 732 is modified to Phosphoserine. Position 734 is an N6-acetyllysine; alternate (lysine 734). Residue lysine 734 forms a Glycyl lysine isopeptide (Lys-Gly) (interchain with G-Cter in SUMO); alternate linkage.

Belongs to the poly(A) polymerase family. Monomer. Found in a complex with CPSF1, FIP1L1 and PAPOLA. Interacts with AHCYL1 and FIP1L1; the interaction with AHCYL1 seems to increase interaction with FIP1L1. Interacts with NUDT21; the interaction is diminished by acetylation. Interacts with KPNB1; the interaction promotes PAP nuclear import and is inhibited by acetylation of PAP. Mg(2+) serves as cofactor. The cofactor is Mn(2+). In terms of processing, polysumoylated. Varying sumoylation depending on tissue- and cell-type. Highly sumoylated in bladder and NIH 3T3 cells. Sumoylation is required for nuclear localization and enhances PAP stability. Desumoylated by SENP1. Inhibits polymerase activity. Hyperphosphorylation on multiple CDK2 consensus and non-consensus sites in the C-terminal Ser/Thr-rich region represses PAP activity in late M-phase. Phosphorylation/dephosphorylation may regulate the interaction between PAP and CPSF. Post-translationally, acetylated in the C-terminus. Acetylation decreases interaction with NUDT21 and KPNB1, and inhibits nuclear localization through inhibiting binding to the importin alpha/beta complex.

It is found in the nucleus. It catalyses the reaction RNA(n) + ATP = RNA(n)-3'-adenine ribonucleotide + diphosphate. Functionally, polymerase that creates the 3'-poly(A) tail of mRNA's. Also required for the endoribonucleolytic cleavage reaction at some polyadenylation sites. May acquire specificity through interaction with a cleavage and polyadenylation specificity factor (CPSF) at its C-terminus. The sequence is that of Poly(A) polymerase alpha (PAPOLA) from Bos taurus (Bovine).